We begin with the raw amino-acid sequence, 403 residues long: Argininosuccinate synthase (403 aa).

10-18 contacts ATP; sequence AYSGGLDTS. Tyr-87 serves as a coordination point for L-citrulline. Gly-117 is a binding site for ATP. Residues Thr-119, Asn-123, and Asp-124 each coordinate L-aspartate. Residue Asn-123 coordinates L-citrulline. L-citrulline is bound by residues Arg-127, Ser-175, Ser-184, Glu-260, and Tyr-272.

Belongs to the argininosuccinate synthase family. Type 1 subfamily. As to quaternary structure, homotetramer.

Its subcellular location is the cytoplasm. It carries out the reaction L-citrulline + L-aspartate + ATP = 2-(N(omega)-L-arginino)succinate + AMP + diphosphate + H(+). It participates in amino-acid biosynthesis; L-arginine biosynthesis; L-arginine from L-ornithine and carbamoyl phosphate: step 2/3. The sequence is that of Argininosuccinate synthase from Bacillus pumilus (strain SAFR-032).